Reading from the N-terminus, the 296-residue chain is Ribosomal RNA small subunit methyltransferase H (296 aa).

Residues glycine 41–histidine 43, aspartate 60, phenylalanine 87, aspartate 103, and glutamine 110 contribute to the S-adenosyl-L-methionine site.

It belongs to the methyltransferase superfamily. RsmH family.

Its subcellular location is the cytoplasm. It carries out the reaction cytidine(1402) in 16S rRNA + S-adenosyl-L-methionine = N(4)-methylcytidine(1402) in 16S rRNA + S-adenosyl-L-homocysteine + H(+). Its function is as follows. Specifically methylates the N4 position of cytidine in position 1402 (C1402) of 16S rRNA. The chain is Ribosomal RNA small subunit methyltransferase H from Synechococcus elongatus (strain ATCC 33912 / PCC 7942 / FACHB-805) (Anacystis nidulans R2).